Here is a 338-residue protein sequence, read N- to C-terminus: Trace amine-associated receptor 9 (338 aa).

Over 1-23 (MELCYENVNGSCIKSSYSPWPRA) the chain is Extracellular. An N-linked (GlcNAc...) asparagine glycan is attached at Asn-9. Cystine bridges form between Cys-12–Cys-176 and Cys-95–Cys-180. The chain crosses the membrane as a helical span at residues 24 to 48 (ILYAVLGLGALLAVFGNLLVITAIL). Topologically, residues 49–58 (HFKQLHTPTN) are cytoplasmic. A helical membrane pass occupies residues 59–80 (FLVASLACADFLVGVTVMPFST). Residues 81-95 (VRSVEGCWYFGDTYC) are Extracellular-facing. A helical membrane pass occupies residues 96–118 (KFHTCFDTSFCFASLFHLCCISI). Residues Asp-102 and Thr-103 each coordinate spermidine. Over 119 to 138 (DRYVAVTDPLTYPTKFTISV) the chain is Cytoplasmic. The chain crosses the membrane as a helical span at residues 139-160 (SGVCIALSWFFSVTYSFSIFYT). Residues 161 to 186 (GANEEGIEELVVALTCVGGCQAPLNQ) lie on the Extracellular side of the membrane. The interval 164-177 (EEGIEELVVALTCV) is extracellular Loop 2 (ECL2). A helical transmembrane segment spans residues 187–208 (NWVLLCFLLFFLPTVVMVFLYG). Residues 209-246 (RIFLVAKQQARKIEGSANQPQASSESYKERVARRERKA) lie on the Cytoplasmic side of the membrane. Residues 247–270 (AKTLGIAMAAFLVSWLPYIIDAVI) form a helical membrane-spanning segment. Over 271-283 (DAYMNFITPAYVY) the chain is Extracellular. Residues 284–304 (EILVWCVYYNSAMNPLIYAFF) form a helical membrane-spanning segment. The Cytoplasmic portion of the chain corresponds to 305–338 (YPWFRKAIKLIVSGKVFRADSSRTNLFSEEAGAG).

It belongs to the G-protein coupled receptor 1 family. As to expression, mainly expressed in neurons of the olfactory epithelium. Also expressed in the intestine.

It is found in the cell membrane. Olfactory receptor specific for trace amines, such as triethylamine, N-methylpiperidine, N,N-dimethylcyclohexylamine (DMCHA), beta-phenylethylamine (beta-PEA), cadaverine (CAD) and polyamines such as spermidine. Trace amine compounds are enriched in animal body fluids and act on trace amine-associated receptors (TAARs) to elicit both intraspecific and interspecific innate behaviors. Trace amine-binding causes a conformation change that triggers signaling via G(s)-class of G alpha proteins (GNAL or GNAS). In mature olfactory sensory neurons, Taar9 is coupled with GNAL/G(olf)G alpha protein and mediates activation of adenylate cyclase activity to activate cAMP signaling and eventually transmit odorant signals to achieve membrane depolarization. In immature olfactory sensory neurons, Taar9 is coupled with GNAS/G(s) G alpha proteins. The sequence is that of Trace amine-associated receptor 9 from Rattus norvegicus (Rat).